A 617-amino-acid chain; its full sequence is uncharacterized protein (617 aa).

Low complexity-rich tracts occupy residues 1 to 16 (MSKC…SNSS) and 36 to 45 (STTSSNGSNS). The segment at 1 to 49 (MSKCATPTPSTSSNSSDEAKRSPQPMSRGFPQRNMSTTSSNGSNSPRHR) is disordered. The next 3 membrane-spanning stretches (helical) occupy residues 219–239 (LMIG…GGLA), 262–282 (TAGA…FTGY), and 427–447 (PITL…LLTM).

It belongs to the TMCO4 family.

The protein localises to the membrane. This is an uncharacterized protein from Caenorhabditis elegans.